The chain runs to 177 residues: MNLLTIFNILPLGEGFGFNDNILETNIINLAAVVGIVVFFVGKNFSILLENRQQTILNNLREANQRASEALERYNQAKKQLELAEKKAKDIRQEGTLKARQEKENCFNQYKLDLVRLEEYKQETLQFYQQKAFQQIYVSIVSRALGEVKQKFNKPLSEQFHATINNFVIARLTEYNP.

The helical transmembrane segment at 22–42 threads the bilayer; the sequence is ILETNIINLAAVVGIVVFFVG.

Belongs to the ATPase B chain family. As to quaternary structure, F-type ATPases have 2 components, F(1) - the catalytic core - and F(0) - the membrane proton channel. F(1) has five subunits: alpha(3), beta(3), gamma(1), delta(1), epsilon(1). F(0) has four main subunits: a(1), b(1), b'(1) and c(10-14). The alpha and beta chains form an alternating ring which encloses part of the gamma chain. F(1) is attached to F(0) by a central stalk formed by the gamma and epsilon chains, while a peripheral stalk is formed by the delta, b and b' chains.

It localises to the plastid. The protein resides in the chloroplast thylakoid membrane. Functionally, f(1)F(0) ATP synthase produces ATP from ADP in the presence of a proton or sodium gradient. F-type ATPases consist of two structural domains, F(1) containing the extramembraneous catalytic core and F(0) containing the membrane proton channel, linked together by a central stalk and a peripheral stalk. During catalysis, ATP synthesis in the catalytic domain of F(1) is coupled via a rotary mechanism of the central stalk subunits to proton translocation. Its function is as follows. Component of the F(0) channel, it forms part of the peripheral stalk, linking F(1) to F(0). The sequence is that of ATP synthase subunit b, chloroplastic from Oedogonium cardiacum (Filamentous green alga).